The following is a 643-amino-acid chain: Phosphomethylpyrimidine synthase (643 aa).

Residues N248, M277, Y306, H342, 362–364 (SRG), 403–406 (DGLR), and E442 each bind substrate. Position 446 (H446) interacts with Zn(2+). Y469 is a substrate binding site. H510 contributes to the Zn(2+) binding site. Residues C590, C593, and C598 each coordinate [4Fe-4S] cluster.

This sequence belongs to the ThiC family. Homodimer. Requires [4Fe-4S] cluster as cofactor.

The enzyme catalyses 5-amino-1-(5-phospho-beta-D-ribosyl)imidazole + S-adenosyl-L-methionine = 4-amino-2-methyl-5-(phosphooxymethyl)pyrimidine + CO + 5'-deoxyadenosine + formate + L-methionine + 3 H(+). Its pathway is cofactor biosynthesis; thiamine diphosphate biosynthesis. Its function is as follows. Catalyzes the synthesis of the hydroxymethylpyrimidine phosphate (HMP-P) moiety of thiamine from aminoimidazole ribotide (AIR) in a radical S-adenosyl-L-methionine (SAM)-dependent reaction. The sequence is that of Phosphomethylpyrimidine synthase from Burkholderia cenocepacia (strain HI2424).